We begin with the raw amino-acid sequence, 258 residues long: Regulatory protein RecX (258 aa).

It belongs to the RecX family.

The protein resides in the cytoplasm. Modulates RecA activity. This chain is Regulatory protein RecX, found in Streptococcus pyogenes serotype M12 (strain MGAS2096).